The sequence spans 54 residues: Photoreceptor disk component PRCD (54 aa).

The S-palmitoyl cysteine moiety is linked to residue C2. Residues 24–54 (QPEPSGADGAVVGSRSERDLQSSGRKEEPLK) form a disordered region. The segment covering 38–54 (RSERDLQSSGRKEEPLK) has biased composition (basic and acidic residues).

Belongs to the PRCD family. In terms of assembly, interacts with RHO/rhodopsin; the interaction promotes PRCD stability. Post-translationally, palmitoylated at Cys-2. Palmitoylation is essential for protein stability and trafficking to the photoreceptor outer segment, but does not appear to be essential for membrane localization. Probably palmitoylated by ZDHHC3. In terms of processing, phosphorylated. Expressed in retina.

The protein localises to the cell projection. The protein resides in the cilium. It localises to the photoreceptor outer segment. It is found in the membrane. Its subcellular location is the endoplasmic reticulum. The protein localises to the golgi apparatus. In terms of biological role, involved in vision. This chain is Photoreceptor disk component PRCD, found in Canis lupus familiaris (Dog).